A 211-amino-acid polypeptide reads, in one-letter code: Peptide methionine sulfoxide reductase MsrA (211 aa).

Cys52 is a catalytic residue.

It belongs to the MsrA Met sulfoxide reductase family.

The catalysed reaction is L-methionyl-[protein] + [thioredoxin]-disulfide + H2O = L-methionyl-(S)-S-oxide-[protein] + [thioredoxin]-dithiol. The enzyme catalyses [thioredoxin]-disulfide + L-methionine + H2O = L-methionine (S)-S-oxide + [thioredoxin]-dithiol. Has an important function as a repair enzyme for proteins that have been inactivated by oxidation. Catalyzes the reversible oxidation-reduction of methionine sulfoxide in proteins to methionine. The protein is Peptide methionine sulfoxide reductase MsrA of Photobacterium profundum (strain SS9).